We begin with the raw amino-acid sequence, 416 residues long: D-amino acid dehydrogenase 2 (416 aa).

Position 3-17 (3-17 (ITVLGAGVVGTAAAY)) interacts with FAD.

It belongs to the DadA oxidoreductase family. FAD is required as a cofactor.

It carries out the reaction a D-alpha-amino acid + A + H2O = a 2-oxocarboxylate + AH2 + NH4(+). Its function is as follows. Oxidative deamination of D-amino acids. This is D-amino acid dehydrogenase 2 (dadA2) from Mesorhizobium japonicum (strain LMG 29417 / CECT 9101 / MAFF 303099) (Mesorhizobium loti (strain MAFF 303099)).